Consider the following 192-residue polypeptide: Vascular endothelial growth factor A (192 aa).

An N-terminal signal peptide occupies residues 1–26 (MNFLLSWIHWGLAALLYFHNAKVLQA). Disulfide bonds link cysteine 52/cysteine 94, cysteine 83/cysteine 128, and cysteine 87/cysteine 130. Residue asparagine 101 is glycosylated (N-linked (GlcNAc...) asparagine).

This sequence belongs to the PDGF/VEGF growth factor family. Homodimer; disulfide-linked. Also found as heterodimer with PGF Interacts with FLT1/VEGFR1 and KDR/VEGFR2 receptors, heparan sulfate and heparin. Expressed by the venom gland, and probably other tissues.

The protein localises to the secreted. Functionally, growth factor active in angiogenesis, vasculogenesis and endothelial cell growth. Induces endothelial cell proliferation, promotes cell migration, inhibits apoptosis and induces permeabilization of blood vessels. This chain is Vascular endothelial growth factor A, found in Vipera ammodytes ammodytes (Western sand viper).